Here is a 264-residue protein sequence, read N- to C-terminus: SPRY domain-containing SOCS box protein 2 (264 aa).

Polar residues predominate over residues Met-1–Ala-18. The tract at residues Met-1–Cys-53 is disordered. Positions Ser-21–Ser-34 are enriched in low complexity. The B30.2/SPRY domain maps to Pro-26–Arg-221. One can recognise an SOCS box domain in the interval Ala-222–Lys-264.

The protein belongs to the SPSB family. In terms of assembly, component of the probable ECS(SPSB2) E3 ubiquitin-protein ligase complex which contains CUL5, RNF7/RBX2, Elongin BC complex and SPSB2. Interacts with CUL5, RNF7, ELOB and ELOC. Interacts with MET. Interacts (via B30.2/SPRY domain) with PAWR; this interaction occurs in association with the Elongin BC complex. Interacts with NOS2.

It localises to the cytoplasm. Its subcellular location is the cytosol. It participates in protein modification; protein ubiquitination. In terms of biological role, substrate recognition component of a SCF-like ECS (Elongin BC-CUL2/5-SOCS-box protein) E3 ubiquitin-protein ligase complex which mediates the ubiquitination and subsequent proteasomal degradation of target proteins. Negatively regulates nitric oxide (NO) production and limits cellular toxicity in activated macrophages by mediating the ubiquitination and proteasomal degradation of NOS2. Acts as a bridge which links NOS2 with the ECS E3 ubiquitin ligase complex components ELOC and CUL5. The polypeptide is SPRY domain-containing SOCS box protein 2 (Spsb2) (Rattus norvegicus (Rat)).